The sequence spans 51 residues: Large ribosomal subunit protein eL39 (51 aa).

The protein belongs to the eukaryotic ribosomal protein eL39 family.

This chain is Large ribosomal subunit protein eL39, found in Saccharolobus islandicus (strain L.S.2.15 / Lassen #1) (Sulfolobus islandicus).